Reading from the N-terminus, the 214-residue chain is Calcineurin B homologous protein 3 (214 aa).

The tract at residues 1-20 is disordered; the sequence is MGAAHSASEEVRELEGKTGF. Gly-2 is lipidated: N-myristoyl glycine. Basic and acidic residues predominate over residues 7 to 16; sequence ASEEVRELEG. The EF-hand domain occupies 110-145; it reads SRKEKLRFLFHMYDSDSDGRITLEEYRNVVEELLSG. The Ca(2+) site is built by Asp-123, Asp-125, Asp-127, Arg-129, and Glu-134.

The protein belongs to the calcineurin regulatory subunit family. CHP subfamily. Monomer. Homodimer; disulfide-linked. Interacts with SLC9A1/NHE1; the interaction enables an optimal Na(+)/H(+) exchange activity. As to expression, expressed in mature megakaryocytes and polymorphonuclear granulocytes (at protein level). Abundantly expressed in heart. Also expressed at a lower level in adult testis and salivary gland, and in the placenta.

It is found in the nucleus. Its subcellular location is the cytoplasm. The protein resides in the membrane. It localises to the cell membrane. The protein localises to the cell projection. It is found in the lamellipodium. Its subcellular location is the ruffle membrane. Its function is as follows. Functions as an integral cofactor in cell pH regulation by controlling plasma membrane-type Na(+)/H(+) exchange activity. Promotes the maturation, transport, cell surface stability and exchange activity of SLC9A1/NHE1 at the plasma membrane. Promotes the induction of hematopoietic stem cell differentiation toward megakaryocytic lineage. Essential for the coupling of ERK cascade activation with the expression of ETS family genes in megakaryocytic differentiation. Also involved in granulocytic differentiation in a ERK-dependent manner. Inhibits the phosphatase activity of calcineurin. This Homo sapiens (Human) protein is Calcineurin B homologous protein 3 (TESC).